A 419-amino-acid polypeptide reads, in one-letter code: Erythromycin esterase type II (419 aa).

Its function is as follows. This enzyme confers resistance to erythromycin through inactivation by hydrolyzing the lactone ring of the antibiotic. The protein is Erythromycin esterase type II (ereB) of Escherichia coli.